Consider the following 223-residue polypeptide: Phosphoribosylformylglycinamidine synthase subunit PurQ (223 aa).

The Glutamine amidotransferase type-1 domain maps to Phe3 to Val223. Cys85 acts as the Nucleophile in catalysis. Residues His193 and Glu195 contribute to the active site.

Part of the FGAM synthase complex composed of 1 PurL, 1 PurQ and 2 PurS subunits.

Its subcellular location is the cytoplasm. It catalyses the reaction N(2)-formyl-N(1)-(5-phospho-beta-D-ribosyl)glycinamide + L-glutamine + ATP + H2O = 2-formamido-N(1)-(5-O-phospho-beta-D-ribosyl)acetamidine + L-glutamate + ADP + phosphate + H(+). It carries out the reaction L-glutamine + H2O = L-glutamate + NH4(+). It participates in purine metabolism; IMP biosynthesis via de novo pathway; 5-amino-1-(5-phospho-D-ribosyl)imidazole from N(2)-formyl-N(1)-(5-phospho-D-ribosyl)glycinamide: step 1/2. Functionally, part of the phosphoribosylformylglycinamidine synthase complex involved in the purines biosynthetic pathway. Catalyzes the ATP-dependent conversion of formylglycinamide ribonucleotide (FGAR) and glutamine to yield formylglycinamidine ribonucleotide (FGAM) and glutamate. The FGAM synthase complex is composed of three subunits. PurQ produces an ammonia molecule by converting glutamine to glutamate. PurL transfers the ammonia molecule to FGAR to form FGAM in an ATP-dependent manner. PurS interacts with PurQ and PurL and is thought to assist in the transfer of the ammonia molecule from PurQ to PurL. In Staphylococcus aureus (strain MSSA476), this protein is Phosphoribosylformylglycinamidine synthase subunit PurQ.